The following is a 2359-amino-acid chain: Pre-mRNA-processing-splicing factor 8A (2359 aa).

Positions 1 to 54 are disordered; the sequence is MWNNNDGMPLAPPGTGGSMMPPPPAAHPSYTALPPPSNPTPPVEPTPEEAEAKL. Positions 33 to 45 are enriched in pro residues; the sequence is LPPPSNPTPPVEP. Residues 2127-2258 enclose the MPN domain; the sequence is TYIMPKNILK…LTSYKLTQTG (132 aa).

In terms of assembly, interacts with CLO.

Its subcellular location is the nucleus. Its function is as follows. Functions as a scaffold that mediates the ordered assembly of spliceosomal proteins and snRNAs. Required for the assembly of the U4/U6-U5 tri-snRNP complex. Required for embryo development. Required for splicing efficiency of COOLAIR introns and usage of the proximal poly(A) site. COOLAIR is a set of long non-coding antisense transcripts produced at the FLOWERING LOCUS C (FLC). COOLAIR initiates just downstream of the major sense transcript poly(A) site and terminates either early or extends into the FLC promoter region. Splicing of COOLAIR by PRP8A is functionally important for FLC regulation. The polypeptide is Pre-mRNA-processing-splicing factor 8A (Arabidopsis thaliana (Mouse-ear cress)).